A 484-amino-acid chain; its full sequence is Membrane-bound lytic murein transglycosylase F (484 aa).

The N-terminal stretch at 1 to 18 (MKGLLLRIIAAFALVLWA) is a signal peptide. Positions 19 to 267 (IDMVFPWQQM…RIEEKYFNHF (249 aa)) are non-LT domain. Residues 268–484 (SQFDYVDMRQ…PLTDNQEKQE (217 aa)) form an LT domain region. E312 is a catalytic residue. Positions 459-484 (ADNKDKPSETDENLPLPLTDNQEKQE) are disordered.

This sequence in the N-terminal section; belongs to the bacterial solute-binding protein 3 family. It in the C-terminal section; belongs to the transglycosylase Slt family.

The protein resides in the cell outer membrane. The catalysed reaction is Exolytic cleavage of the (1-&gt;4)-beta-glycosidic linkage between N-acetylmuramic acid (MurNAc) and N-acetylglucosamine (GlcNAc) residues in peptidoglycan, from either the reducing or the non-reducing ends of the peptidoglycan chains, with concomitant formation of a 1,6-anhydrobond in the MurNAc residue.. Its function is as follows. Murein-degrading enzyme that degrades murein glycan strands and insoluble, high-molecular weight murein sacculi, with the concomitant formation of a 1,6-anhydromuramoyl product. Lytic transglycosylases (LTs) play an integral role in the metabolism of the peptidoglycan (PG) sacculus. Their lytic action creates space within the PG sacculus to allow for its expansion as well as for the insertion of various structures such as secretion systems and flagella. The sequence is that of Membrane-bound lytic murein transglycosylase F from Mannheimia succiniciproducens (strain KCTC 0769BP / MBEL55E).